A 274-amino-acid chain; its full sequence is Eukaryotic translation initiation factor 3 subunit G (274 aa).

The RRM domain occupies 192–270 (TAIRISNLSN…LILNVEWSKP (79 aa)).

Belongs to the eIF-3 subunit G family. As to quaternary structure, component of the eukaryotic translation initiation factor 3 (eIF-3) complex.

It is found in the cytoplasm. RNA-binding component of the eukaryotic translation initiation factor 3 (eIF-3) complex, which is involved in protein synthesis of a specialized repertoire of mRNAs and, together with other initiation factors, stimulates binding of mRNA and methionyl-tRNAi to the 40S ribosome. The eIF-3 complex specifically targets and initiates translation of a subset of mRNAs involved in cell proliferation. This subunit can bind 18S rRNA. In Bombyx mori (Silk moth), this protein is Eukaryotic translation initiation factor 3 subunit G.